Here is a 334-residue protein sequence, read N- to C-terminus: MEAAHFFEGTEKLLEVWFSRQQPDANQGSGDLRTIPRSEWDILLKDVQCSIISVTKTDKQEAYVLSESSMFVSKRRFILKTCGTTLLLKALVPLLKLARDYSGFDSIQSFFYSRKNFMKPSHQGYPHRNFQEEIEFLNAIFPNGAAYCMGRMNSDCWYLYTLDFPESRVINQPDQTLEILMSELDPAVMDQFYMKDGVTAKDVTRESGIRDLIPGSVIDATMFNPCGYSMNGMKSDGTYWTIHITPEPEFSYVSFETNLSQTSYDDLIRKVVEVFKPGKFVTTLFVNQSSKCRTVLSSPQKIEGFKRLDCQSALFNDYNFVFTSFAKKQQQQQS.

Phe7 serves as a coordination point for substrate. Catalysis depends on residues Glu8 and Glu11. Residue Glu67 coordinates substrate. The Schiff-base intermediate with substrate; via pyruvic acid role is filled by Ser68. Ser68 is subject to Pyruvic acid (Ser); by autocatalysis. Cys82 functions as the Proton donor; for catalytic activity in the catalytic mechanism. Position 223 (Phe223) interacts with substrate. Residues Ser229 and His243 each act as proton acceptor; for processing activity in the active site. Substrate is bound at residue Glu247. The residue at position 298 (Ser298) is a Phosphoserine.

Belongs to the eukaryotic AdoMetDC family. In terms of assembly, heterotetramer of two alpha and two beta chains. Pyruvate serves as cofactor. Is synthesized initially as an inactive proenzyme. Formation of the active enzyme involves a self-maturation process in which the active site pyruvoyl group is generated from an internal serine residue via an autocatalytic post-translational modification. Two non-identical subunits are generated from the proenzyme in this reaction, and the pyruvate is formed at the N-terminus of the alpha chain, which is derived from the carboxyl end of the proenzyme. The post-translation cleavage follows an unusual pathway, termed non-hydrolytic serinolysis, in which the side chain hydroxyl group of the serine supplies its oxygen atom to form the C-terminus of the beta chain, while the remainder of the serine residue undergoes an oxidative deamination to produce ammonia and the pyruvoyl group blocking the N-terminus of the alpha chain.

The catalysed reaction is S-adenosyl-L-methionine + H(+) = S-adenosyl 3-(methylsulfanyl)propylamine + CO2. It functions in the pathway amine and polyamine biosynthesis; S-adenosylmethioninamine biosynthesis; S-adenosylmethioninamine from S-adenosyl-L-methionine: step 1/1. Essential for biosynthesis of the polyamines spermidine and spermine. Promotes maintenance and self-renewal of embryonic stem cells, by maintaining spermine levels. This Bos taurus (Bovine) protein is S-adenosylmethionine decarboxylase proenzyme (AMD1).